The primary structure comprises 117 residues: Ribosome-binding factor A (117 aa).

It belongs to the RbfA family. In terms of assembly, monomer. Binds 30S ribosomal subunits, but not 50S ribosomal subunits or 70S ribosomes.

Its subcellular location is the cytoplasm. One of several proteins that assist in the late maturation steps of the functional core of the 30S ribosomal subunit. Associates with free 30S ribosomal subunits (but not with 30S subunits that are part of 70S ribosomes or polysomes). Required for efficient processing of 16S rRNA. May interact with the 5'-terminal helix region of 16S rRNA. This Streptococcus suis (strain 98HAH33) protein is Ribosome-binding factor A.